The sequence spans 338 residues: E3 ubiquitin-protein ligase SPL1 (338 aa).

A helical transmembrane segment spans residues Met1–Arg21. At Ser22–Lys223 the chain is on the chloroplast intermembrane side. The helical transmembrane segment at Tyr224–Leu246 threads the bilayer. At Lys247–His338 the chain is on the cytoplasmic side. The RING-type zinc finger occupies Cys291 to Arg326.

The protein localises to the plastid. It is found in the chloroplast outer membrane. The catalysed reaction is S-ubiquitinyl-[E2 ubiquitin-conjugating enzyme]-L-cysteine + [acceptor protein]-L-lysine = [E2 ubiquitin-conjugating enzyme]-L-cysteine + N(6)-ubiquitinyl-[acceptor protein]-L-lysine.. The protein operates within protein modification; protein ubiquitination. Possesses E3 ubiquitin-protein ligase activity. This chain is E3 ubiquitin-protein ligase SPL1, found in Arabidopsis thaliana (Mouse-ear cress).